The following is a 121-amino-acid chain: Ribosome-binding factor A (121 aa).

Belongs to the RbfA family. In terms of assembly, monomer. Binds 30S ribosomal subunits, but not 50S ribosomal subunits or 70S ribosomes.

Its subcellular location is the cytoplasm. In terms of biological role, one of several proteins that assist in the late maturation steps of the functional core of the 30S ribosomal subunit. Associates with free 30S ribosomal subunits (but not with 30S subunits that are part of 70S ribosomes or polysomes). Required for efficient processing of 16S rRNA. May interact with the 5'-terminal helix region of 16S rRNA. This is Ribosome-binding factor A from Oenococcus oeni (strain ATCC BAA-331 / PSU-1).